The chain runs to 582 residues: Arginine--tRNA ligase (582 aa).

Residues 127–137 (PNLAKEMHVGH) carry the 'HIGH' region motif.

It belongs to the class-I aminoacyl-tRNA synthetase family. In terms of assembly, monomer.

The protein localises to the cytoplasm. The enzyme catalyses tRNA(Arg) + L-arginine + ATP = L-arginyl-tRNA(Arg) + AMP + diphosphate. The sequence is that of Arginine--tRNA ligase from Psychromonas ingrahamii (strain DSM 17664 / CCUG 51855 / 37).